A 341-amino-acid chain; its full sequence is Nucleoid-associated protein Sden_2335 (341 aa).

This sequence belongs to the YejK family.

The protein resides in the cytoplasm. It is found in the nucleoid. The chain is Nucleoid-associated protein Sden_2335 from Shewanella denitrificans (strain OS217 / ATCC BAA-1090 / DSM 15013).